The sequence spans 292 residues: Histamine N-methyltransferase (292 aa).

Glu28 is a substrate binding site. 5 residues coordinate S-adenosyl-L-methionine: Gly60, Glu89, Gln94, Ser120, and Ile142. Position 283 (Asn283) interacts with substrate.

Belongs to the class I-like SAM-binding methyltransferase superfamily. HNMT family. As to quaternary structure, monomer.

Its subcellular location is the cytoplasm. The enzyme catalyses histamine + S-adenosyl-L-methionine = N(tau)-methylhistamine + S-adenosyl-L-homocysteine + H(+). Its function is as follows. Inactivates histamine by N-methylation. Plays an important role in degrading histamine and in regulating the airway response to histamine. This chain is Histamine N-methyltransferase (HNMT), found in Pongo abelii (Sumatran orangutan).